The sequence spans 527 residues: Baeyer-Villiger monooxygenase (527 aa).

FAD-binding positions include S36, E56, 64-67, D76, Y82, and I125; that span reads TWRV. 74–76 provides a ligand contact to NADP(+); sequence ACD. Residues 199–205, 222–223, and 308–309 contribute to the NADP(+) site; these read TGASAIQ, RT, and KR. M415 is a binding site for FAD.

The protein belongs to the FAD-binding monooxygenase family. Requires FAD as cofactor.

Its function is as follows. Catalyzes a Baeyer-Villiger oxidation reaction, i.e. the insertion of an oxygen atom into a carbon-carbon bond adjacent to a carbonyl, which converts ketones to esters or lactones using NADPH and/or NADH as an electron donor. Thus, can convert bicyclo[3.2.0]hept-2-en-6-one into the oxidative lactone products 2-oxabicyclo[3.3.0]oct-6-en-3-one and 3-oxabicyclo[3.3.0]oct-6-en-2-one. Is also able to catalyze the sulfoxidation of methyl phenyl sulfide (thioanisole). This Pseudomonas aeruginosa (strain ATCC 15692 / DSM 22644 / CIP 104116 / JCM 14847 / LMG 12228 / 1C / PRS 101 / PAO1) protein is Baeyer-Villiger monooxygenase.